The sequence spans 489 residues: Homoserine O-acetyltransferase (489 aa).

Residues 63-435 (NALVICHALS…SPEGHDAFLL (373 aa)) form the AB hydrolase-1 domain. Ser-162 is an active-site residue. Ser-162 acts as the Nucleophile in catalysis. Residues 247–272 (RFGRNVPDPSKRQNINGTERLPTPPN) form a disordered region. Residues Asp-401 and His-430 contribute to the active site.

This sequence belongs to the AB hydrolase superfamily. MetX family.

The catalysed reaction is L-homoserine + acetyl-CoA = O-acetyl-L-homoserine + CoA. Its pathway is amino-acid biosynthesis; L-methionine biosynthesis via de novo pathway; O-acetyl-L-homoserine from L-homoserine: step 1/1. Its function is as follows. Commits homoserine to the methionine biosynthesis pathway by catalyzing its O-acetylation. This is Homoserine O-acetyltransferase (metE) from Emericella nidulans (strain FGSC A4 / ATCC 38163 / CBS 112.46 / NRRL 194 / M139) (Aspergillus nidulans).